The following is a 92-amino-acid chain: Small ribosomal subunit protein uS19 (92 aa).

It belongs to the universal ribosomal protein uS19 family.

Its function is as follows. Protein S19 forms a complex with S13 that binds strongly to the 16S ribosomal RNA. The sequence is that of Small ribosomal subunit protein uS19 from Rickettsia felis (strain ATCC VR-1525 / URRWXCal2) (Rickettsia azadi).